A 258-amino-acid polypeptide reads, in one-letter code: UDP-2,3-diacylglucosamine hydrolase (258 aa).

Residues Asp-15, His-17, Asp-48, Asn-88, and His-123 each coordinate Mn(2+). Residue Asn-88–Arg-89 coordinates substrate. Substrate is bound by residues Asp-131, Ser-169, Asn-173, Lys-176, and His-204. His-204 and His-206 together coordinate Mn(2+).

Belongs to the LpxH family. It depends on Mn(2+) as a cofactor.

It is found in the cell inner membrane. The catalysed reaction is UDP-2-N,3-O-bis[(3R)-3-hydroxytetradecanoyl]-alpha-D-glucosamine + H2O = 2-N,3-O-bis[(3R)-3-hydroxytetradecanoyl]-alpha-D-glucosaminyl 1-phosphate + UMP + 2 H(+). The protein operates within glycolipid biosynthesis; lipid IV(A) biosynthesis; lipid IV(A) from (3R)-3-hydroxytetradecanoyl-[acyl-carrier-protein] and UDP-N-acetyl-alpha-D-glucosamine: step 4/6. Hydrolyzes the pyrophosphate bond of UDP-2,3-diacylglucosamine to yield 2,3-diacylglucosamine 1-phosphate (lipid X) and UMP by catalyzing the attack of water at the alpha-P atom. Involved in the biosynthesis of lipid A, a phosphorylated glycolipid that anchors the lipopolysaccharide to the outer membrane of the cell. The polypeptide is UDP-2,3-diacylglucosamine hydrolase (Bordetella pertussis (strain Tohama I / ATCC BAA-589 / NCTC 13251)).